Consider the following 294-residue polypeptide: Acetyl-coenzyme A carboxylase carboxyl transferase subunit beta (294 aa).

The CoA carboxyltransferase N-terminal domain occupies 25–294; sequence VWTKCTSCEQ…PLVVPVDGSH (270 aa). 4 residues coordinate Zn(2+): cysteine 29, cysteine 32, cysteine 48, and cysteine 51. Residues 29 to 51 form a C4-type zinc finger; that stretch reads CTSCEQVLYSAELERNLEVCPKC.

This sequence belongs to the AccD/PCCB family. As to quaternary structure, acetyl-CoA carboxylase is a heterohexamer composed of biotin carboxyl carrier protein (AccB), biotin carboxylase (AccC) and two subunits each of ACCase subunit alpha (AccA) and ACCase subunit beta (AccD). Requires Zn(2+) as cofactor.

It is found in the cytoplasm. It carries out the reaction N(6)-carboxybiotinyl-L-lysyl-[protein] + acetyl-CoA = N(6)-biotinyl-L-lysyl-[protein] + malonyl-CoA. Its pathway is lipid metabolism; malonyl-CoA biosynthesis; malonyl-CoA from acetyl-CoA: step 1/1. Its function is as follows. Component of the acetyl coenzyme A carboxylase (ACC) complex. Biotin carboxylase (BC) catalyzes the carboxylation of biotin on its carrier protein (BCCP) and then the CO(2) group is transferred by the transcarboxylase to acetyl-CoA to form malonyl-CoA. This chain is Acetyl-coenzyme A carboxylase carboxyl transferase subunit beta, found in Aliivibrio fischeri (strain MJ11) (Vibrio fischeri).